The primary structure comprises 98 residues: NADH-ubiquinone oxidoreductase chain 4L (98 aa).

Helical transmembrane passes span 1–21, 28–48, and 59–79; these read MTSI…GVLI, STLL…ALLI, and APLI…ALLV.

This sequence belongs to the complex I subunit 4L family. In terms of assembly, core subunit of respiratory chain NADH dehydrogenase (Complex I) which is composed of 45 different subunits.

The protein resides in the mitochondrion inner membrane. It carries out the reaction a ubiquinone + NADH + 5 H(+)(in) = a ubiquinol + NAD(+) + 4 H(+)(out). Core subunit of the mitochondrial membrane respiratory chain NADH dehydrogenase (Complex I) which catalyzes electron transfer from NADH through the respiratory chain, using ubiquinone as an electron acceptor. Part of the enzyme membrane arm which is embedded in the lipid bilayer and involved in proton translocation. The sequence is that of NADH-ubiquinone oxidoreductase chain 4L (MT-ND4L) from Vombatus ursinus (Common wombat).